We begin with the raw amino-acid sequence, 242 residues long: UPF0246 protein SPH_1662 (242 aa).

This sequence belongs to the UPF0246 family.

This chain is UPF0246 protein SPH_1662, found in Streptococcus pneumoniae (strain Hungary19A-6).